Consider the following 367-residue polypeptide: tRNA-specific 2-thiouridylase MnmA (367 aa).

Residues 11-18 (AMSGGVDS) and methionine 37 contribute to the ATP site. Residues 97–99 (NPD) form an interaction with target base in tRNA region. Cysteine 102 serves as the catalytic Nucleophile. An intrachain disulfide couples cysteine 102 to cysteine 199. An ATP-binding site is contributed by glycine 127. The segment at 149 to 151 (KDQ) is interaction with tRNA. Residue cysteine 199 is the Cysteine persulfide intermediate of the active site. The interaction with tRNA stretch occupies residues 311–312 (RY).

It belongs to the MnmA/TRMU family. As to quaternary structure, interacts with TusE.

It localises to the cytoplasm. It catalyses the reaction S-sulfanyl-L-cysteinyl-[protein] + uridine(34) in tRNA + AH2 + ATP = 2-thiouridine(34) in tRNA + L-cysteinyl-[protein] + A + AMP + diphosphate + H(+). Its function is as follows. Catalyzes the 2-thiolation of uridine at the wobble position (U34) of tRNA(Lys), tRNA(Glu) and tRNA(Gln), leading to the formation of s(2)U34, the first step of tRNA-mnm(5)s(2)U34 synthesis. Sulfur is provided by IscS, via a sulfur-relay system. Binds ATP and its substrate tRNAs. In Buchnera aphidicola subsp. Schizaphis graminum (strain Sg), this protein is tRNA-specific 2-thiouridylase MnmA.